The primary structure comprises 295 residues: Bis(5'-nucleosyl)-tetraphosphatase, symmetrical (295 aa).

Positions 271-295 are disordered; sequence LSIEHPRHTHTPRRKAKKRHKRSPK. Basic residues predominate over residues 277–295; that stretch reads RHTHTPRRKAKKRHKRSPK.

This sequence belongs to the Ap4A hydrolase family.

It catalyses the reaction P(1),P(4)-bis(5'-adenosyl) tetraphosphate + H2O = 2 ADP + 2 H(+). Its function is as follows. Hydrolyzes diadenosine 5',5'''-P1,P4-tetraphosphate to yield ADP. This Xylella fastidiosa (strain M23) protein is Bis(5'-nucleosyl)-tetraphosphatase, symmetrical.